Reading from the N-terminus, the 156-residue chain is Arginine repressor (156 aa).

It belongs to the ArgR family.

The protein resides in the cytoplasm. It participates in amino-acid biosynthesis; L-arginine biosynthesis [regulation]. Its function is as follows. Regulates arginine biosynthesis genes. This is Arginine repressor from Erwinia tasmaniensis (strain DSM 17950 / CFBP 7177 / CIP 109463 / NCPPB 4357 / Et1/99).